Here is a 530-residue protein sequence, read N- to C-terminus: Ubiquitin carboxyl-terminal hydrolase 17-like protein 24 (530 aa).

A USP domain is found at 80–375; sequence AGLQNMGNTC…QAYVLFYIQK (296 aa). Cysteine 89 acts as the Nucleophile in catalysis. Histidine 334 acts as the Proton acceptor in catalysis. 2 stretches are compositionally biased toward basic and acidic residues: residues 382–392 and 398–412; these read SESVSRGREPR and DTDRRATQGELKRDH. Disordered stretches follow at residues 382–412 and 477–530; these read SESVSRGREPRALGAEDTDRRATQGELKRDH and NHHP…LVCQ. Residues 493–505 show a composition bias toward polar residues; sequence TPTHQESMNTGTL. Positions 510-524 are enriched in basic residues; the sequence is GRARRSKGKNKHSKR.

This sequence belongs to the peptidase C19 family. USP17 subfamily. In terms of tissue distribution, expressed in heart, brain, liver and skeletal muscle.

It is found in the nucleus. The protein resides in the nucleolus. The protein localises to the endoplasmic reticulum. It carries out the reaction Thiol-dependent hydrolysis of ester, thioester, amide, peptide and isopeptide bonds formed by the C-terminal Gly of ubiquitin (a 76-residue protein attached to proteins as an intracellular targeting signal).. In terms of biological role, deubiquitinating enzyme that removes conjugated ubiquitin from specific proteins to regulate different cellular processes that may include cell proliferation, progression through the cell cycle, apoptosis, cell migration, and the cellular response to viral infection. In Homo sapiens (Human), this protein is Ubiquitin carboxyl-terminal hydrolase 17-like protein 24 (USP17L24).